A 311-amino-acid polypeptide reads, in one-letter code: Triacylglycerol lipase (311 aa).

Positions 1 to 26 (MKKKSLLPLGLAIGLASLAASPLIQA) are cleaved as a signal peptide. The AB hydrolase-1 domain occupies 35-280 (PIVLAHGMLG…DNYRMNHLDE (246 aa)). Methionine 42 serves as a coordination point for substrate. Catalysis depends on serine 108, which acts as the Nucleophile. Residue histidine 109 participates in substrate binding. Cysteines 209 and 261 form a disulfide. Aspartate 235 is a Ca(2+) binding site. Active-site charge relay system residues include aspartate 255 and histidine 277. The Ca(2+) site is built by aspartate 279, glutamine 283, and leucine 287.

This sequence belongs to the AB hydrolase superfamily. Pseudomonas lipase family. As to quaternary structure, monomer. Requires Ca(2+) as cofactor.

It localises to the secreted. It carries out the reaction a triacylglycerol + H2O = a diacylglycerol + a fatty acid + H(+). Its activity is regulated as follows. Na(+) increases lipase activity. Inhibited by diethyl p-nitrophenyl phosphate and 3,4-dichloroisocoumarin (DCI). In terms of biological role, catalyzes the hydrolysis of triacylglycerol. It also exhibits some esterase activity with p-nitrophenyl acetate and Tween 80 as substrates, however the lipase activity is approximately eight times the esterase activity. It shows a marked specificity for the 1,3-oleyl residues of triolein. The chain is Triacylglycerol lipase from Pseudomonas aeruginosa (strain ATCC 15692 / DSM 22644 / CIP 104116 / JCM 14847 / LMG 12228 / 1C / PRS 101 / PAO1).